The following is a 417-amino-acid chain: Multifunctional CCA protein (417 aa).

2 residues coordinate ATP: glycine 8 and arginine 11. Residues glycine 8 and arginine 11 each contribute to the CTP site. Residues aspartate 21 and aspartate 23 each coordinate Mg(2+). Arginine 91, arginine 137, and arginine 140 together coordinate ATP. CTP contacts are provided by arginine 91, arginine 137, and arginine 140. The HD domain maps to 225–326; that stretch reads SGIHTLMTLQ…LNVLKKTDAF (102 aa).

It belongs to the tRNA nucleotidyltransferase/poly(A) polymerase family. Bacterial CCA-adding enzyme type 1 subfamily. As to quaternary structure, monomer. Can also form homodimers and oligomers. Mg(2+) is required as a cofactor. Requires Ni(2+) as cofactor.

It catalyses the reaction a tRNA precursor + 2 CTP + ATP = a tRNA with a 3' CCA end + 3 diphosphate. It carries out the reaction a tRNA with a 3' CCA end + 2 CTP + ATP = a tRNA with a 3' CCACCA end + 3 diphosphate. Functionally, catalyzes the addition and repair of the essential 3'-terminal CCA sequence in tRNAs without using a nucleic acid template. Adds these three nucleotides in the order of C, C, and A to the tRNA nucleotide-73, using CTP and ATP as substrates and producing inorganic pyrophosphate. tRNA 3'-terminal CCA addition is required both for tRNA processing and repair. Also involved in tRNA surveillance by mediating tandem CCA addition to generate a CCACCA at the 3' terminus of unstable tRNAs. While stable tRNAs receive only 3'-terminal CCA, unstable tRNAs are marked with CCACCA and rapidly degraded. The chain is Multifunctional CCA protein from Neisseria meningitidis serogroup C (strain 053442).